We begin with the raw amino-acid sequence, 372 residues long: DNA replication and repair protein RecF (372 aa).

Residue 30–37 coordinates ATP; it reads GENAQGKT.

It belongs to the RecF family.

The protein resides in the cytoplasm. Its function is as follows. The RecF protein is involved in DNA metabolism; it is required for DNA replication and normal SOS inducibility. RecF binds preferentially to single-stranded, linear DNA. It also seems to bind ATP. The sequence is that of DNA replication and repair protein RecF from Exiguobacterium sp. (strain ATCC BAA-1283 / AT1b).